We begin with the raw amino-acid sequence, 283 residues long: Pantothenate synthetase (283 aa).

ATP is bound at residue M30 to H37. H37 serves as the catalytic Proton donor. Q61 contributes to the (R)-pantoate binding site. Q61 serves as a coordination point for beta-alanine. Residue G147–D150 participates in ATP binding. Q153 provides a ligand contact to (R)-pantoate. Residues I176 and V184–R187 contribute to the ATP site.

Belongs to the pantothenate synthetase family. Homodimer.

It is found in the cytoplasm. The enzyme catalyses (R)-pantoate + beta-alanine + ATP = (R)-pantothenate + AMP + diphosphate + H(+). Its pathway is cofactor biosynthesis; (R)-pantothenate biosynthesis; (R)-pantothenate from (R)-pantoate and beta-alanine: step 1/1. Its function is as follows. Catalyzes the condensation of pantoate with beta-alanine in an ATP-dependent reaction via a pantoyl-adenylate intermediate. This Chlorobium phaeobacteroides (strain DSM 266 / SMG 266 / 2430) protein is Pantothenate synthetase.